The primary structure comprises 503 residues: Lanosterol 14-alpha demethylase (503 aa).

Residues 24–44 (GNLLSTLLIACAFTLSLVYLF) traverse the membrane as a helical segment. Heme is bound at residue cysteine 449.

The protein belongs to the cytochrome P450 family. It depends on heme as a cofactor. Ubiquitinated by MARCHF6, leading to proteasomal degradation.

The protein resides in the endoplasmic reticulum membrane. The protein localises to the microsome membrane. It carries out the reaction a 14alpha-methyl steroid + 3 reduced [NADPH--hemoprotein reductase] + 3 O2 = a Delta(14) steroid + formate + 3 oxidized [NADPH--hemoprotein reductase] + 4 H2O + 4 H(+). The enzyme catalyses lanosterol + 3 reduced [NADPH--hemoprotein reductase] + 3 O2 = 4,4-dimethyl-5alpha-cholesta-8,14,24-trien-3beta-ol + formate + 3 oxidized [NADPH--hemoprotein reductase] + 4 H2O + 4 H(+). It catalyses the reaction 24,25-dihydrolanosterol + 3 reduced [NADPH--hemoprotein reductase] + 3 O2 = 4,4-dimethyl-8,14-cholestadien-3beta-ol + formate + 3 oxidized [NADPH--hemoprotein reductase] + 4 H2O + 4 H(+). The catalysed reaction is a 14alpha-methyl steroid + reduced [NADPH--hemoprotein reductase] + O2 = a 14alpha-hydroxymethyl steroid + oxidized [NADPH--hemoprotein reductase] + H2O + H(+). It carries out the reaction a 14alpha-hydroxymethyl steroid + reduced [NADPH--hemoprotein reductase] + O2 = a 14alpha-formyl steroid + oxidized [NADPH--hemoprotein reductase] + 2 H2O + H(+). The enzyme catalyses a 14alpha-formyl steroid + reduced [NADPH--hemoprotein reductase] + O2 = a Delta(14) steroid + formate + oxidized [NADPH--hemoprotein reductase] + H2O + 2 H(+). It catalyses the reaction lanosterol + reduced [NADPH--hemoprotein reductase] + O2 = 32-hydroxylanosterol + oxidized [NADPH--hemoprotein reductase] + H2O + H(+). The catalysed reaction is 32-hydroxylanosterol + reduced [NADPH--hemoprotein reductase] + O2 = 32-oxolanosterol + oxidized [NADPH--hemoprotein reductase] + 2 H2O + H(+). It carries out the reaction 32-oxolanosterol + reduced [NADPH--hemoprotein reductase] + O2 = 4,4-dimethyl-5alpha-cholesta-8,14,24-trien-3beta-ol + formate + oxidized [NADPH--hemoprotein reductase] + H2O + 2 H(+). The enzyme catalyses 24,25-dihydrolanosterol + reduced [NADPH--hemoprotein reductase] + O2 = 32-hydroxy-24,25-dihydrolanosterol + oxidized [NADPH--hemoprotein reductase] + H2O + H(+). It catalyses the reaction 32-hydroxy-24,25-dihydrolanosterol + reduced [NADPH--hemoprotein reductase] + O2 = 32-oxo-24,25-dihydrolanosterol + oxidized [NADPH--hemoprotein reductase] + 2 H2O + H(+). The catalysed reaction is 32-oxo-24,25-dihydrolanosterol + reduced [NADPH--hemoprotein reductase] + O2 = 4,4-dimethyl-8,14-cholestadien-3beta-ol + formate + oxidized [NADPH--hemoprotein reductase] + H2O + 2 H(+). The protein operates within steroid biosynthesis; zymosterol biosynthesis; zymosterol from lanosterol: step 1/6. Inhibited by azalanstat. Inhibited by azole antifungal agents ketoconazole, itraconazole and fluconazole. Functionally, sterol 14alpha-demethylase that plays a critical role in the cholesterol biosynthesis pathway, being cholesterol the major sterol component in mammalian membranes as well as a precursor for bile acid and steroid hormone synthesis. Cytochrome P450 monooxygenase that catalyzes the three-step oxidative removal of the 14alpha-methyl group (C-32) of sterols such as lanosterol (lanosta-8,24-dien-3beta-ol) and 24,25-dihydrolanosterol (DHL) in the form of formate, and converts the sterols to 4,4-dimethyl-5alpha-cholesta-8,14,24-trien-3beta-ol and 4,4-dimethyl-8,14-cholestadien-3beta-ol, respectively, which are intermediates of cholesterol biosynthesis. Can also demethylate substrates not intrinsic to mammals, such as eburicol (24-methylene-24,25-dihydrolanosterol), but at a lower rate than DHL. This Rattus norvegicus (Rat) protein is Lanosterol 14-alpha demethylase.